Reading from the N-terminus, the 348-residue chain is Anthranilate phosphoribosyltransferase (348 aa).

5-phospho-alpha-D-ribose 1-diphosphate-binding positions include G93, 96 to 97 (GD), T101, 103 to 106 (NVST), 121 to 129 (KHGNRAVSS), and S133. Residue G93 coordinates anthranilate. S105 serves as a coordination point for Mg(2+). Anthranilate is bound at residue N124. R179 lines the anthranilate pocket. Residues D238 and E239 each contribute to the Mg(2+) site.

It belongs to the anthranilate phosphoribosyltransferase family. Homodimer. Mg(2+) serves as cofactor.

It catalyses the reaction N-(5-phospho-beta-D-ribosyl)anthranilate + diphosphate = 5-phospho-alpha-D-ribose 1-diphosphate + anthranilate. It functions in the pathway amino-acid biosynthesis; L-tryptophan biosynthesis; L-tryptophan from chorismate: step 2/5. In terms of biological role, catalyzes the transfer of the phosphoribosyl group of 5-phosphorylribose-1-pyrophosphate (PRPP) to anthranilate to yield N-(5'-phosphoribosyl)-anthranilate (PRA). The sequence is that of Anthranilate phosphoribosyltransferase from Desulfotalea psychrophila (strain LSv54 / DSM 12343).